The sequence spans 348 residues: Chaperone protein DnaJ (348 aa).

Residues 3-65 (DLYGILGVDH…EQRQRYDRHV (63 aa)) form the J domain. The CR-type zinc finger occupies 109 to 191 (GGSQVVKIDS…CYGNGSRSAP (83 aa)). The Zn(2+) site is built by Cys-122, Cys-125, Cys-139, Cys-142, Cys-165, Cys-168, Cys-179, and Cys-182. CXXCXGXG motif repeat units follow at residues 122-129 (CDVCNGTR), 139-146 (CFDCNGSG), 165-172 (CSKCRGNG), and 179-186 (CRRCYGNG).

It belongs to the DnaJ family. As to quaternary structure, homodimer. Zn(2+) serves as cofactor.

It is found in the cytoplasm. Participates actively in the response to hyperosmotic and heat shock by preventing the aggregation of stress-denatured proteins and by disaggregating proteins, also in an autonomous, DnaK-independent fashion. Unfolded proteins bind initially to DnaJ; upon interaction with the DnaJ-bound protein, DnaK hydrolyzes its bound ATP, resulting in the formation of a stable complex. GrpE releases ADP from DnaK; ATP binding to DnaK triggers the release of the substrate protein, thus completing the reaction cycle. Several rounds of ATP-dependent interactions between DnaJ, DnaK and GrpE are required for fully efficient folding. Also involved, together with DnaK and GrpE, in the DNA replication of plasmids through activation of initiation proteins. The chain is Chaperone protein DnaJ from Tropheryma whipplei (strain TW08/27) (Whipple's bacillus).